The primary structure comprises 525 residues: Mitochondrial-processing peptidase subunit alpha (525 aa).

A mitochondrion-targeting transit peptide spans 1–33 (MAAVVLAATRLLRGSGSWGCSRLRFGPPAYRRF). Lys-64 is subject to N6-succinyllysine. Residue Lys-299 is modified to N6-acetyllysine.

The protein belongs to the peptidase M16 family. Heterodimer of PMPCA (alpha) and PMPCB (beta) subunits, forming the mitochondrial processing protease (MPP) in which PMPCA is involved in substrate recognition and binding and PMPCB is the catalytic subunit. In terms of tissue distribution, ubiquitously expressed with highest expression in fetal tissues and adult brain, cerebellum and cerebellar vermis.

The protein localises to the mitochondrion matrix. It localises to the mitochondrion inner membrane. Substrate recognition and binding subunit of the essential mitochondrial processing protease (MPP), which cleaves the mitochondrial sequence off newly imported precursors proteins. The chain is Mitochondrial-processing peptidase subunit alpha (PMPCA) from Homo sapiens (Human).